A 106-amino-acid chain; its full sequence is Urease subunit beta (106 aa).

It belongs to the urease beta subunit family. In terms of assembly, heterotrimer of UreA (gamma), UreB (beta) and UreC (alpha) subunits. Three heterotrimers associate to form the active enzyme.

The protein localises to the cytoplasm. It catalyses the reaction urea + 2 H2O + H(+) = hydrogencarbonate + 2 NH4(+). It participates in nitrogen metabolism; urea degradation; CO(2) and NH(3) from urea (urease route): step 1/1. This is Urease subunit beta from Alkalilimnicola ehrlichii (strain ATCC BAA-1101 / DSM 17681 / MLHE-1).